A 646-amino-acid chain; its full sequence is RNase E specificity factor CsrD (646 aa).

Helical transmembrane passes span 10–30 (FVTLLTGLTIFVTLLGCSLSF) and 135–155 (MTTAPLTGAIGFIIVMLFLAV). Positions 152–219 (FLAVRWLQRQ…REQHSRLDTL (68 aa)) are HAMP-like. Positions 194–224 (RTSSALDTLLREIQNAREQHSRLDTLIRSYA) form a coiled coil. Positions 254-387 (THGIVMMIRL…GGNSWAIYDD (134 aa)) constitute a GGDEF domain. The 249-residue stretch at 396–644 (NVRWRTLIEQ…TNVKKYSQRY (249 aa)) folds into the EAL domain.

Its subcellular location is the cell membrane. Serves as a specificity factor required for RNase E-mediated decay of the small global regulatory RNAs CsrB and CsrC, it is probably not a nuclease. Nor does its activity involve c-di-GMP, despite its domain composition. Positively modulates motility gene expression, is also required for curli expression. The polypeptide is RNase E specificity factor CsrD (csrD) (Escherichia coli (strain K12)).